A 366-amino-acid chain; its full sequence is Prostaglandin F2-alpha receptor (366 aa).

Residues 1 to 31 (MSINSSKQPASSAAGLIANTTCQTENRLSVF) lie on the Extracellular side of the membrane. 2 N-linked (GlcNAc...) asparagine glycosylation sites follow: Asn-4 and Asn-19. A helical membrane pass occupies residues 32–55 (FSIIFMTVGIVSNSLAIAILMKAY). Over 56–69 (QRFRRKSKASFLLL) the chain is Cytoplasmic. A helical transmembrane segment spans residues 70–90 (ASGLVITDFFGHLINGGIAVF). The Extracellular portion of the chain corresponds to 91–109 (VYASDKDWIRFDQSNILCS). Cys-108 and Cys-186 are disulfide-bonded. A helical transmembrane segment spans residues 110 to 131 (VFGISMVFSGLCPLFLGSTMAI). The Cytoplasmic segment spans residues 132–152 (ERCIGVTNPLFHSTKITSKHV). A helical membrane pass occupies residues 153–175 (KMILSGVCMFAVFVALLPILGHR). Residues 176–198 (DYQIQASRTWCFYNTEHIEDWED) are Extracellular-facing. Residues 199 to 224 (RFYLLFFSSLGLLALGISFSCNAVTG) form a helical membrane-spanning segment. Residues 225–250 (VTLLRVKFRSQQHRQGRSHHLEMVIQ) are Cytoplasmic-facing. The chain crosses the membrane as a helical span at residues 251–267 (LLAIMCVSCVCWSPFLV). Residues 268-285 (TMANIAINGNNSPVTCET) lie on the Extracellular side of the membrane. A helical transmembrane segment spans residues 286–307 (TLFALRMATWNQILDPWVYILL). Topologically, residues 308 to 366 (RKAVLRNLYKLASRCCGVNIISLHIWELSSIKNSLKVAAISESPAAEKENQQASSEAGL) are cytoplasmic.

It belongs to the G-protein coupled receptor 1 family. As to expression, highest expression in pregnant ovary. Also found in a low extent in the kidney. In the brain, expressed in astrocytes and oligodendrocytes, and meningeal fibroblasts, but not in migroglia cells.

It is found in the cell membrane. Its function is as follows. Receptor for prostaglandin F2-alpha (PGF2-alpha). The activity of this receptor is mediated by G proteins which activate a phosphatidylinositol-calcium second messenger system. Initiates luteolysis in the corpus luteum. This chain is Prostaglandin F2-alpha receptor (Ptgfr), found in Rattus norvegicus (Rat).